A 148-amino-acid polypeptide reads, in one-letter code: Transcriptional regulator MraZ (148 aa).

SpoVT-AbrB domains lie at 5 to 53 and 82 to 125; these read ETAI…VEKE and SALL…SEQA.

The protein belongs to the MraZ family. As to quaternary structure, forms oligomers.

The protein resides in the cytoplasm. The protein localises to the nucleoid. This is Transcriptional regulator MraZ from Xylella fastidiosa (strain Temecula1 / ATCC 700964).